The sequence spans 419 residues: UDP-N-acetylglucosamine 1-carboxyvinyltransferase 2 (419 aa).

22 to 23 (KN) contacts phosphoenolpyruvate. UDP-N-acetyl-alpha-D-glucosamine is bound at residue R92. C116 acts as the Proton donor in catalysis. C116 is modified (2-(S-cysteinyl)pyruvic acid O-phosphothioketal). Residues 121-125 (RPIDL), D306, and I328 each bind UDP-N-acetyl-alpha-D-glucosamine.

The protein belongs to the EPSP synthase family. MurA subfamily.

The protein localises to the cytoplasm. The enzyme catalyses phosphoenolpyruvate + UDP-N-acetyl-alpha-D-glucosamine = UDP-N-acetyl-3-O-(1-carboxyvinyl)-alpha-D-glucosamine + phosphate. Its pathway is cell wall biogenesis; peptidoglycan biosynthesis. In terms of biological role, cell wall formation. Adds enolpyruvyl to UDP-N-acetylglucosamine. The protein is UDP-N-acetylglucosamine 1-carboxyvinyltransferase 2 of Streptococcus pyogenes serotype M1.